Here is a 140-residue protein sequence, read N- to C-terminus: Low calcium response locus protein T (140 aa).

The polypeptide is Low calcium response locus protein T (lcrT) (Yersinia pestis).